A 508-amino-acid polypeptide reads, in one-letter code: MKDGEETPSVDGSTSASNREKLGTDLEIGPVDLSDGGKEEKVKDPNLVDWDGPDDPENPLNWTSKRKITATCSIALITFLTPLGSSMFAPGVGQLVKDFNVTSTELSSFVVSVYLLGYCFGPLIIAPLSELYGRQYVYHVCNILYVIWTIACAFAPEIGSLVVFRFFAGLAGSCPLTIGAGSIADMFVQEQRGGAMAAWALGPLIGPVVGPVAGAYLAQAKGWRWSFYVLAMAAGAITISSLFSIRESYAPTLLARKTKKLQKETGNMNLRSALDTGRTPKELFLYSIVRPTKMLFRSPIVFLLSLYVGVIYGYLYLLFTTITSVFQQQYNFSQGAVGLTYLGLGVGSLIGLFLIGATSDRLLNYLAAKNGEKKPEYRLPPMVPGAIFVPISLFMYGWTAYYQTHWIVPIIGTSFLGTGMMITFMCVSTYLVDAFTNYAASVMAANTVFRSLAGALLPLAGPKMYAVLGLGWGNSLLGFIALAFCALPVIFWIYGERIRTSPKFQVTF.

Positions 1-60 (MKDGEETPSVDGSTSASNREKLGTDLEIGPVDLSDGGKEEKVKDPNLVDWDGPDDPENPL) are disordered. Over residues 35-46 (DGGKEEKVKDPN) the composition is skewed to basic and acidic residues. N-linked (GlcNAc...) asparagine glycosylation occurs at asparagine 61. A helical transmembrane segment spans residues 73-93 (SIALITFLTPLGSSMFAPGVG). Asparagine 100 carries N-linked (GlcNAc...) asparagine glycosylation. The next 6 membrane-spanning stretches (helical) occupy residues 108-128 (SFVV…IAPL), 143-163 (ILYV…SLVV), 166-186 (FFAG…IADM), 197-217 (AAWA…GAYL), 225-245 (WSFY…LFSI), and 299-319 (PIVF…YLLF). The short motif at 293 to 307 (KMLFRSPIVFLLSLY) is the Peroxisomal targeting signal element. Asparagine 331 is a glycosylation site (N-linked (GlcNAc...) asparagine). 5 helical membrane-spanning segments follow: residues 335-355 (GAVG…LFLI), 379-399 (LPPM…YGWT), 407-427 (IVPI…FMCV), 435-457 (FTNY…GALL), and 475-495 (SLLG…WIYG).

This sequence belongs to the major facilitator superfamily.

The protein localises to the peroxisome membrane. Functionally, MFS-type transporter involved in penicillin production, most likely through the translocation of isopenicillin N from the cytosol to the peroxisomal lumen across the peroxisomal membrane. In Penicillium rubens (strain ATCC 28089 / DSM 1075 / NRRL 1951 / Wisconsin 54-1255) (Penicillium chrysogenum), this protein is MFS-type transporter penM.